The sequence spans 740 residues: Arf-GAP with coiled-coil, ANK repeat and PH domain-containing protein 1 (740 aa).

Residues 1-226 (MTVKLDFEEC…RKELGAQLHQ (226 aa)) form the BAR domain. A required for formation of endosomal tubules when overexpressed with PIP5K1C region spans residues 1–382 (MTVKLDFEEC…RGPGQGSGHL (382 aa)). The PH domain maps to 265-360 (GLVMEGHLFK…WVSAVQSSIA (96 aa)). One can recognise an Arf-GAP domain in the interval 405–527 (GHVVAQVQSV…KFLTKLPEIR (123 aa)). Residues 405–740 (GHVVAQVQSV…SRRSHDLHTL (336 aa)) are required for interaction with GULP1. A C4-type zinc finger spans residues 420 to 443 (CCDCREPAPEWASINLGVTLCIQC). Residue Y485 is modified to 3'-nitrotyrosine. Residues 525–566 (EIRGRRGGRGRPRGQPPVPPKPSIRPRPGSLRSKPEPPSEDL) form a prevents interaction with ITGB1 when S-554 is not phosphorylated region. Residues 525–581 (EIRGRRGGRGRPRGQPPVPPKPSIRPRPGSLRSKPEPPSEDLGSLHPGALLFRASGH) form a disordered region. Over residues 538 to 549 (GQPPVPPKPSIR) the composition is skewed to pro residues. At S554 the chain carries Phosphoserine; by PKB. ANK repeat units lie at residues 606–635 (DNAT…NVNQ), 639–668 (AGRG…DLGA), and 672–702 (EGRD…EAEA).

As to quaternary structure, banana-shaped homodimer laterally assembling into tetramers, the tetramers further pack helically onto the membrane. Interacts with GTP-bound ARF6. Interacts with third cytoplasmic loop of SLC2A4/GLUT4. Interacts with CLTC. Interacts with GULP1. Forms a complex with GDP-bound ARF6 and GULP1. Interacts with ITGB1; required for ITGB1 recycling. Post-translationally, phosphorylation at Ser-554 by PKB is required for interaction with ITGB1, export of ITGB1 from recycling endosomes to the cell surface and ITGB1-dependent cell migration. Highest level in lung and spleen. Low level in heart, kidney, liver and pancreas.

It localises to the recycling endosome membrane. Its activity is regulated as follows. GAP activity stimulated by phosphatidylinositol 4,5-bisphosphate (PIP2) and phosphatidic acid. GTPase-activating protein (GAP) for ADP ribosylation factor 6 (ARF6) required for clathrin-dependent export of proteins from recycling endosomes to trans-Golgi network and cell surface. Required for regulated export of ITGB1 from recycling endosomes to the cell surface and ITGB1-dependent cell migration. The chain is Arf-GAP with coiled-coil, ANK repeat and PH domain-containing protein 1 (ACAP1) from Homo sapiens (Human).